We begin with the raw amino-acid sequence, 209 residues long: ATP-dependent dethiobiotin synthetase BioD (209 aa).

13-18 is an ATP binding site; that stretch reads DIGKTV. A Mg(2+)-binding site is contributed by threonine 17. Residue lysine 33 is part of the active site. Residues arginine 47 and glutamate 100 each contribute to the Mg(2+) site. ATP-binding positions include 100-103 and 184-186; these read EGAG and PRL.

Belongs to the dethiobiotin synthetase family. As to quaternary structure, homodimer. Mg(2+) is required as a cofactor.

It is found in the cytoplasm. It catalyses the reaction (7R,8S)-7,8-diammoniononanoate + CO2 + ATP = (4R,5S)-dethiobiotin + ADP + phosphate + 3 H(+). It functions in the pathway cofactor biosynthesis; biotin biosynthesis; biotin from 7,8-diaminononanoate: step 1/2. Catalyzes a mechanistically unusual reaction, the ATP-dependent insertion of CO2 between the N7 and N8 nitrogen atoms of 7,8-diaminopelargonic acid (DAPA, also called 7,8-diammoniononanoate) to form a ureido ring. The chain is ATP-dependent dethiobiotin synthetase BioD from Rhodopseudomonas palustris (strain BisB18).